A 368-amino-acid polypeptide reads, in one-letter code: BTB/POZ and TAZ domain-containing protein 5 (368 aa).

The disordered stretch occupies residues methionine 1–serine 25. The BTB domain maps to alanine 55–aspartate 123. The segment at glutamine 233 to serine 324 adopts a TAZ-type zinc-finger fold. A caM-binding region spans residues arginine 335 to proline 358.

As to quaternary structure, interacts with CUL3A. Preferentially expressed in young leaves, roots and stems.

The protein resides in the cytoplasm. Its pathway is protein modification; protein ubiquitination. In terms of biological role, may act as a substrate-specific adapter of an E3 ubiquitin-protein ligase complex (CUL3-RBX1-BTB) which mediates the ubiquitination and subsequent proteasomal degradation of target proteins. The protein is BTB/POZ and TAZ domain-containing protein 5 (BT5) of Arabidopsis thaliana (Mouse-ear cress).